We begin with the raw amino-acid sequence, 246 residues long: MFCASSSPITSPLYPKAYKFSQTKSNSKRFSSLRASLPVSDNKLLKFEYTPWLIVGLGNPGLKYYGTRHNIGFEMIDHIARATDISMNTIQSKALVGIGSVGEVPILLVKPQGYMNFSGESVGPLAAYYQIPLRHILMIYDDMGLSNGVLRLQPKGGHSQHNGLKNVTEHLNGCRGYPRLSIGIGNPPGNMDMKAFLLQKFSPLERKQMDEGLEQGVEGVKTLVEEGFSDSISRFNLGQKYKFHKV.

The N-terminal 34 residues, 1–34 (MFCASSSPITSPLYPKAYKFSQTKSNSKRFSSLR), are a transit peptide targeting the chloroplast. Tyrosine 64 lines the tRNA pocket. Histidine 69 (proton acceptor) is an active-site residue. Residues tyrosine 114, asparagine 116, and asparagine 162 each coordinate tRNA.

It belongs to the PTH family. CRS2 subfamily. As to quaternary structure, part of large ribonucleo-protein complexes that include group IIB introns and either CAF1 or CAF2.

Its subcellular location is the plastid. The protein resides in the chloroplast stroma. In terms of biological role, required for the splicing of group IIB introns in chloroplasts. This chain is Chloroplastic group IIB intron splicing facilitator CRS2-A, chloroplastic (CRS2A), found in Arabidopsis thaliana (Mouse-ear cress).